The following is a 67-amino-acid chain: Cell division protein ZapB (67 aa).

Residues Leu3–Val59 adopt a coiled-coil conformation.

Belongs to the ZapB family. In terms of assembly, homodimer. The ends of the coiled-coil dimer bind to each other, forming polymers. Interacts with FtsZ.

The protein localises to the cytoplasm. Functionally, non-essential, abundant cell division factor that is required for proper Z-ring formation. It is recruited early to the divisome by direct interaction with FtsZ, stimulating Z-ring assembly and thereby promoting cell division earlier in the cell cycle. Its recruitment to the Z-ring requires functional FtsA or ZipA. The polypeptide is Cell division protein ZapB (Shewanella halifaxensis (strain HAW-EB4)).